Reading from the N-terminus, the 268-residue chain is Protein DEEPER ROOTING 1 (268 aa).

Positions 11 to 21 (LNGKQGNKKPN) are enriched in low complexity. The tract at residues 11–39 (LNGKQGNKKPNTVPITTHPAKQEPREEFS) is disordered. Residues 30–39 (AKQEPREEFS) are compositionally biased toward basic and acidic residues. An IGT motif motif is present at residues 44–50 (GLLAIGT). A disordered region spans residues 220–246 (SRAASMKKYLEDRQIPTKKESNTEDDT). The segment covering 227–246 (KYLEDRQIPTKKESNTEDDT) has biased composition (basic and acidic residues).

This sequence belongs to the LAZY family. In terms of tissue distribution, expressed in roots.

In terms of biological role, involved in the development of the root system architecture by influencing lateral root angles and primary root length. The protein is Protein DEEPER ROOTING 1 of Prunus persica (Peach).